A 515-amino-acid polypeptide reads, in one-letter code: 1-pyrroline-5-carboxylate dehydrogenase (515 aa).

Active-site residues include Glu-286 and Cys-320.

It belongs to the aldehyde dehydrogenase family. RocA subfamily.

The catalysed reaction is L-glutamate 5-semialdehyde + NAD(+) + H2O = L-glutamate + NADH + 2 H(+). Its pathway is amino-acid degradation; L-proline degradation into L-glutamate; L-glutamate from L-proline: step 2/2. This Bacillus anthracis (strain A0248) protein is 1-pyrroline-5-carboxylate dehydrogenase.